Reading from the N-terminus, the 1054-residue chain is MEDSATKHIIQMTGFKMEEKEALVKLLLKLDCTFIKSEKYKNCTHLIAERLCKSEKFLAACAAGKWVLTKDYIIHSAKSGRWLDETTYEWGYKIEKDSHYSPQMQSAPKRWREELKRTGAPGAFHRWKVVLLVRADKRSDSLVRVLEAGKANVILPKNSPSGITHVIASNARISAEREQENFKAPFYPIQYLGDFLLEKEIQNDEHSQISPAWTKYNNQEKGNDVGFPEMKGAGENMYRTQNKMENHNKNVSDRFVLSEHHKKKFKDFRKDIRSVKKRNTLRRHGLENQKETKKKDKNIQRSYILRKKNKKEGYCKTDDAHDTIRSMLKKRGHYREQKEMKNPLLTDGTKESKTKDVKTNMNLIEIKNALKKQIYKDIYRAQAVRYNCIRVDKQPVYNVEVKNSEFPRGILNLIENLIEGQFFKEAIEELSSLQAHYIPPVCLLHAILENVLQDKIDTFSGRYFHILSALLHLHPPWKSPAMLKYYLELFQCPTCMKGAWDFTEVLIRSCLFNEDFCHQISENISTKVVNLTLLKFFFNLLEGEVRHLSQKLCDWSDSQSLKVTEKAILHEIFWSGSETSGLLTKPVNMLLEWTIYSHKEKCKSNDVFKHELSYLLTGILGAAVDYWIFLGIQMGRNVIRHMSDDLGSYISLSCDDFSSKELEIFICSFSSSWLQMFVAEAIFKKLCLQGPTSTCTEPLSLQKIIDSYLPILGKMDIHGAGKMQSPKKLCQRPCLESQRALLMLNGAKRKQAEGRPELLELNRAKCSSSLKKLKKKSEELSCSKENCPSLVTKMNFHKTNLKGETALHRVCIKNQVEKLIILLSLPGIDINVKDNAGWTPLHEACNYGNTECVQEILQRCPEVDLLTQVDGVTPLHDALSNGHVEIGKLLLQRGGPELLQQRNSKGELPLDYVLSPKDKEELFAITNIDDTVDNFHAKTQKHFYHQQLEFGSFLLSRMLINFCSIFDLSSEFILAFKGLGHLNELLMACNSDTEASNAHTDWLLDVYARNIKTLKKLPSVLKELPENLNVCPGVHTEALLVTLKMMCQSITELS.

BRCT domains lie at 2 to 80 and 121 to 199; these read EDSA…AKSG and PGAF…LLEK. The interval 283-303 is disordered; sequence RHGLENQKETKKKDKNIQRSY. Residues 284 to 299 are compositionally biased toward basic and acidic residues; that stretch reads HGLENQKETKKKDKNI. The segment at 407–1054 is NSE5-like domain; mediates interaction with SLF2; that stretch reads PRGILNLIEN…MMCQSITELS (648 aa). ANK repeat units lie at residues 802 to 832, 836 to 865, and 870 to 900; these read KGET…DINV, AGWT…EVDL, and DGVT…ELLQ.

In terms of assembly, interacts (via BRCT domains) with RAD18 (via C-terminus and phosphorylated form); this interaction is required for efficient repair of UV-induced DNA damage. Interacts (via N-terminus) with SLF2; this interaction links RAD18 to the SMC5-SMC6 complex. Interacts (via BRCT domains) with RAD18; this interaction occurs in a SLF2-independent manner. Interacts with SMC6. As to expression, widely expressed. Expressed in testis. Expressed in spermatocytes.

It localises to the nucleus. The protein localises to the cytoplasm. The protein resides in the cytoskeleton. It is found in the microtubule organizing center. Its subcellular location is the centrosome. Functionally, plays a role in the DNA damage response (DDR) pathway by regulating postreplication repair of UV-damaged DNA and genomic stability maintenance. The SLF1-SLF2 complex acts to link RAD18 with the SMC5-SMC6 complex at replication-coupled interstrand cross-links (ICL) and DNA double-strand breaks (DSBs) sites on chromatin during DNA repair in response to stalled replication forks. Promotes the recruitment of SLF2 and the SMC5-SMC6 complex to DNA lesions. The protein is SMC5-SMC6 complex localization factor protein 1 of Mus musculus (Mouse).